Here is a 265-residue protein sequence, read N- to C-terminus: Early E4 31 kDa protein (265 aa).

The protein belongs to the adenoviridae E4 30 to 34 kDa protein family. Interacts with E1B-55k.

The protein localises to the host nucleus. It localises to the host cytoplasm. In terms of biological role, plays a major role to prevent cellular inhibition of viral genome replication by nuclear bodies. Assembles an SCF-like E3 ubiquitin ligase complex based on the cellular proteins ELOB, ELOC, CUL5 and RBX1, in cooperation with viral E1B-55K. This viral RING-type ligase ubiquitinates cellular substrates prior to proteasomal degradation: p53/TP53, LIG4, MRE11-RAD50-NBS1 (MRN) complex, ITGA3, DAXX and BLM. This chain is Early E4 31 kDa protein, found in Canine adenovirus serotype 1 (strain RI261) (CAdV-1).